A 514-amino-acid polypeptide reads, in one-letter code: HTH-type transcriptional regulatory protein TyrR (514 aa).

The ACT domain occupies Arg2–Trp72. Residues Glu78 to Met120 form the PAS domain. In terms of domain architecture, Sigma-54 factor interaction spans Ile206 to Thr428. ATP contacts are provided by residues Gly234–Asp241 and Ala290–Glu299. The H-T-H motif DNA-binding region spans Ser482–Arg502.

In terms of assembly, homodimer. In presence of tyrosine (or high concentrations of phenylalanine or tryptophan) and ATP, it self-associates to form an hexamer.

It is found in the cytoplasm. Its function is as follows. Dual transcriptional regulator of the TyrR regulon, which includes a number of genes coding for proteins involved in the biosynthesis or transport of the three aromatic amino acids, phenylalanine, tyrosine and tryptophan. These three aromatic amino acids act as effectors which bind to the TyrR protein to form an active regulatory protein. Acts by binding specifically to TyrR boxes in the promoter region of the target genes. This chain is HTH-type transcriptional regulatory protein TyrR, found in Citrobacter braakii.